Consider the following 100-residue polypeptide: uncharacterized protein (100 aa).

The signal sequence occupies residues 1–17 (MIMKYFCTVMIAIALVG). The N-palmitoyl cysteine moiety is linked to residue cysteine 18. Cysteine 18 is lipidated: S-diacylglycerol cysteine.

It is found in the cell membrane. This is an uncharacterized protein from Salmonella typhi.